Here is a 468-residue protein sequence, read N- to C-terminus: Na(+)/H(+) antiporter (468 aa).

The next 8 helical transmembrane spans lie at 12–32, 36–56, 81–96, 103–123, 133–153, 169–189, 204–224, and 258–278; these read HLALIVAGGFITFFCYFSEVF, LLVGEAVLGSITGLIFGPHAA, DVRVFASAIELPGAYF, IIVMLLPVMAYGWLVTAGFAY, GSLLIAGCITSTDPVLSALIV, LLIAESGCNDGMAVPFFYFAI, WVLLVVLYECAFGIFFGCVIG, and GIGTIIGVDDLLMSFFAGILF. N-linked (GlcNAc...) asparagine glycosylation occurs at asparagine 287. The chain crosses the membrane as a helical span at residues 293–313; sequence VPAFIDQTFSLLFFTYYGTII. The N-linked (GlcNAc...) asparagine glycan is linked to asparagine 319. A run of 3 helical transmembrane segments spans residues 320 to 340, 362 to 382, and 408 to 428; these read WSVEGLPVWRLIVFSILTLVC, ALFVGHFGPIGVCAVYMAFLA, and IIWPIISFVILSSIIVHGFSI. Residues serine 449 and serine 451 each carry the phosphoserine modification.

The protein belongs to the fungal Na(+)/H(+) exchanger family.

It is found in the cell membrane. Its function is as follows. Sodium export from cell, takes up external protons in exchange for internal sodium ions. Involved in regulation of pH. This chain is Na(+)/H(+) antiporter, found in Schizosaccharomyces pombe (strain 972 / ATCC 24843) (Fission yeast).